We begin with the raw amino-acid sequence, 259 residues long: Archaerhodopsin-2 (259 aa).

The propeptide occupies 1-6 (MDPIAL). Gln-7 carries the pyrrolidone carboxylic acid modification. Residues 7-18 (QAGFDLLNDGRP) lie on the Extracellular side of the membrane. The helical transmembrane segment at 19-40 (ETLWLGIGTLLMLIGTFYFIAR) threads the bilayer. Residues 41 to 49 (GWGVTDKEA) lie on the Cytoplasmic side of the membrane. The chain crosses the membrane as a helical span at residues 50–71 (REYYAITILVPGIASAAYLAMF). The Extracellular segment spans residues 72–90 (FGIGVTEVELASGTVLDIY). A helical membrane pass occupies residues 91 to 112 (YARYADWLFTTPLLLLDLALLA). Topologically, residues 113-115 (KVD) are cytoplasmic. The helical transmembrane segment at 116-138 (RVTIGTLIGVDALMIVTGLIGAL) threads the bilayer. Topologically, residues 139 to 142 (SKTP) are extracellular. Residues 143 to 171 (LARYTWWLFSTIAFLFVLYYLLTSLRSAA) form a helical membrane-spanning segment. Over 172–174 (AKR) the chain is Cytoplasmic. A helical transmembrane segment spans residues 175–203 (SEEVRSTFNTLTALVAVLWTAYPILWIVG). At 204–211 (TEGAGVVG) the chain is on the extracellular side. A helical transmembrane segment spans residues 212 to 244 (LGIETLAFMVLDVTAKVGFGFVLLRSRAILGET). Lys-227 is subject to N6-(retinylidene)lysine. Topologically, residues 245-259 (EAPEPSAGADASAAD) are cytoplasmic.

The protein belongs to the archaeal/bacterial/fungal opsin family.

It is found in the cell membrane. Its function is as follows. Light-driven proton pump. It may interact with bacterioruberin in the claret membrane. The polypeptide is Archaerhodopsin-2 (Halobacterium sp. (strain aus-2)).